We begin with the raw amino-acid sequence, 248 residues long: DNA repair protein RecO (248 aa).

It belongs to the RecO family.

Involved in DNA repair and RecF pathway recombination. This is DNA repair protein RecO from Bacillus cytotoxicus (strain DSM 22905 / CIP 110041 / 391-98 / NVH 391-98).